A 227-amino-acid polypeptide reads, in one-letter code: Uracil-DNA glycosylase (227 aa).

The active-site Proton acceptor is aspartate 65.

It belongs to the uracil-DNA glycosylase (UDG) superfamily. UNG family.

The protein localises to the cytoplasm. It carries out the reaction Hydrolyzes single-stranded DNA or mismatched double-stranded DNA and polynucleotides, releasing free uracil.. Functionally, excises uracil residues from the DNA which can arise as a result of misincorporation of dUMP residues by DNA polymerase or due to deamination of cytosine. The chain is Uracil-DNA glycosylase from Lactobacillus delbrueckii subsp. bulgaricus (strain ATCC 11842 / DSM 20081 / BCRC 10696 / JCM 1002 / NBRC 13953 / NCIMB 11778 / NCTC 12712 / WDCM 00102 / Lb 14).